We begin with the raw amino-acid sequence, 76 residues long: Exodeoxyribonuclease 7 small subunit (76 aa).

It belongs to the XseB family. Heterooligomer composed of large and small subunits.

The protein localises to the cytoplasm. It catalyses the reaction Exonucleolytic cleavage in either 5'- to 3'- or 3'- to 5'-direction to yield nucleoside 5'-phosphates.. In terms of biological role, bidirectionally degrades single-stranded DNA into large acid-insoluble oligonucleotides, which are then degraded further into small acid-soluble oligonucleotides. The sequence is that of Exodeoxyribonuclease 7 small subunit from Staphylococcus haemolyticus (strain JCSC1435).